A 420-amino-acid polypeptide reads, in one-letter code: Putative T-box protein 33 (420 aa).

Residues leucine 93–lysine 291 constitute a DNA-binding region (T-box). Over residues serine 395–isoleucine 412 the composition is skewed to polar residues. The interval serine 395–methionine 420 is disordered.

It localises to the nucleus. The polypeptide is Putative T-box protein 33 (tbx-33) (Caenorhabditis elegans).